The sequence spans 457 residues: Keratin, type II cytoskeletal 7 (457 aa).

Residue serine 2 is modified to N-acetylserine. The residue at position 2 (serine 2) is a Phosphoserine. The head stretch occupies residues 2–84; that stretch reads SIHFSSRSTA…DPTIQQVRQE (83 aa). A glycan (O-linked (GlcNAc) serine) is linked at serine 7. Arginine 15 is modified (dimethylated arginine; alternate). At arginine 15 the chain carries Omega-N-methylarginine; alternate. Residues serine 47 and serine 65 each carry the phosphoserine modification. Residues 84 to 120 form a coil 1A region; it reads EEREQIKTLNNKFASFIDKVRFLEQQNKMLETKWALL. An IF rod domain is found at 85 to 397; the sequence is EREQIKTLNN…KLLEGEESRL (313 aa). Position 91 is a phosphothreonine (threonine 91). The linker 1 stretch occupies residues 121–138; sequence QEQKSAKSSQLPRIFEAQ. Residue lysine 124 forms a Glycyl lysine isopeptide (Lys-Gly) (interchain with G-Cter in SUMO2) linkage. A coil 1B region spans residues 139–230; it reads IAGLRQQLET…TLHETELAEL (92 aa). Lysine 173 is modified (N6-acetyllysine). Residues serine 211, serine 246, and serine 248 each carry the phosphoserine modification. Residues 231–254 form a linker 12 region; the sequence is QSQISDTSVVLSMDNSRSLDLDGI. Positions 255-393 are coil 2; the sequence is IADVKAQYEE…ATYRKLLEGE (139 aa). Residues lysine 259 and lysine 280 each participate in a glycyl lysine isopeptide (Lys-Gly) (interchain with G-Cter in SUMO2) cross-link. Phosphothreonine is present on threonine 283. Glycyl lysine isopeptide (Lys-Gly) (interchain with G-Cter in SUMO2) cross-links involve residues lysine 290 and lysine 325. Residues 394–457 form a tail region; it reads ESRLSGDGMG…TSTTRRGTHN (64 aa).

It belongs to the intermediate filament family. Heterotetramer of two type I and two type II keratins. Interacts with eukaryotic translation initiator factor 3 (eIF3) subunit EIF3S10. Interacts with GPER1. In terms of processing, arg-15 is dimethylated, probably to asymmetric dimethylarginine. As to expression, expressed in most simple epithelia tested including liver, lactating mammary gland, lung, kidney, stomach, duodenum, colon, oviduct, uterus, pancreas, epididymis, prostate, preputial gland and mesothelium, and in most stratified epithelia tested including dorsal skin, paw/toe, tail, tongue, cervix, forestomach, and bladder. Also expressed in Henle layer of the inner root sheath of whisker follicle.

In terms of biological role, blocks interferon-dependent interphase and stimulates DNA synthesis in cells. This is Keratin, type II cytoskeletal 7 from Mus musculus (Mouse).